A 520-amino-acid polypeptide reads, in one-letter code: MPTTLRMLNNNLLIVIGTFAVCVYIVLQRSKARLPLPPGPRKWPLIGNLLDMPGGRAWLKYAEWSREYGSDIIHLSAAGTSILVLNSAELVNELMEKRSAIYSSRAQLTMLHELMGWKDAFSFAPTNPTWRAQRKIFMQALNPNNAALFHGKQLRATHELLWRLHKGPANLFHELHHWAAILIMDITYGIRGDAADPYIETAVEALDSMAIAGAPGAFLVDAVPLLRHMPEWTPGAGFKRQAREWNVLRQKMANRPFIAAKQQITSGSYTPSLVSNALEAVDKNQDLAEQEELIKGAAVTSYGGGSDTVVAAVSAFVLAILQHPEIQAKAQRQLDEVLGHGELPSFQDVQSLPYITALVKEVLRHNPVTPLAIPHLLSEDDTWDGYWLPKGSIVMANAWAILHDENTYPDPMPFNPDRFLRPDGKLDETVKDPATASFGFGRRLCPGRHIALSSIWISVASILACYVIRKEVDAAGREVVPDGEWYGGPTLFNRPLPFKCRFTPRSKAAEAIIVSLENTV.

A helical transmembrane segment spans residues M7 to L27. A heme-binding site is contributed by C445.

The protein belongs to the cytochrome P450 family. Heme is required as a cofactor.

The protein resides in the membrane. It functions in the pathway secondary metabolite biosynthesis. Its function is as follows. Cytochrome P450 monooxygenase that is able to use pyrene, phenanthrene, 3,5-dimethoxy-trans-stilbene and 3,5,4'-trimethoxy-trans-stilbene as substrates for oxidation. This is Cytochrome P450 monooxygenase 98 from Postia placenta (strain ATCC 44394 / Madison 698-R) (Brown rot fungus).